The chain runs to 281 residues: General control transcription factor GCN4 (281 aa).

Ser17 is modified (phosphoserine). 2 required for transcriptional activation regions span residues Leu89–Ser100 and Pro106–Asp125. Position 165 is a phosphothreonine; by PHO85 (Thr165). Positions Val167 to Leu200 match the Nuclear localization signal motif. The tract at residues Leu217–Gln248 is disordered. Ser218 carries the post-translational modification Phosphoserine. In terms of domain architecture, bZIP spans Ser225–Arg281. Residues Lys231–Arg249 carry the Nuclear localization signal motif. The basic motif stretch occupies residues Lys231–Lys251. The interval Leu253–Leu274 is leucine-zipper.

Belongs to the bZIP family. GCN4 subfamily. As to quaternary structure, homodimer. Each subunit binds overlapping and non-identical half-sites that flank the central CG base-pair in the pseudo-palindromic motif 5'-ATGA[CG]TCAT-3'. Interacts with the mediator tail; the interaction with GAL11/MED15 is direct. Interacts with the SAGA histone acetyltransferase complex. Interacts with the SWI/SNF chromatin remodeling complex. Phosphorylated by the cyclin-CDK PCL5-PHO85. Phosphorylation of Thr-165 induces degradation of GCN4 by the E3 ubiquitin ligase complex SCF(Cdc4).

The protein resides in the nucleus. In terms of biological role, master transcriptional regulator that mediates the response to amino acid starvation. Binds variations of the DNA sequence 5'-ATGA[CG]TCAT-3' in canonical nucleosome-depleted 5'-positioned promoters, and also within coding sequences and 3' non-coding regions. During nutrient starvation (low or poor amino acid, carbon or purine sources), it activates genes required for amino acid biosynthesis and transport, autophagy, cofactor biosynthesis and transport, mitochondrial transport, and additional downstream transcription factors. Activates transcription by recruiting multiple coactivators, including the mediator complex, the SAGA complex, and the SWI/SNF complex, to enable assembly of the pre-initiation complex at core promoters. In Saccharomyces cerevisiae (strain ATCC 204508 / S288c) (Baker's yeast), this protein is General control transcription factor GCN4.